The primary structure comprises 177 residues: Coatomer subunit zeta-1 (177 aa).

Met-1 carries the N-acetylmethionine modification.

Belongs to the adaptor complexes small subunit family. As to quaternary structure, oligomeric complex that consists of at least the alpha, beta, beta', gamma, delta, epsilon and zeta subunits.

The protein localises to the cytoplasm. The protein resides in the golgi apparatus membrane. Its subcellular location is the cytoplasmic vesicle. It is found in the COPI-coated vesicle membrane. Its function is as follows. The coatomer is a cytosolic protein complex that binds to dilysine motifs and reversibly associates with Golgi non-clathrin-coated vesicles, which further mediate biosynthetic protein transport from the ER, via the Golgi up to the trans Golgi network. Coatomer complex is required for budding from Golgi membranes, and is essential for the retrograde Golgi-to-ER transport of dilysine-tagged proteins. The zeta subunit may be involved in regulating the coat assembly and, hence, the rate of biosynthetic protein transport due to its association-dissociation properties with the coatomer complex. The polypeptide is Coatomer subunit zeta-1 (COPZ1) (Bos taurus (Bovine)).